We begin with the raw amino-acid sequence, 98 residues long: Integration host factor subunit alpha (98 aa).

Over residues 53 to 69 (DLREKSERPGRNPKTGE) the composition is skewed to basic and acidic residues. The segment at 53–73 (DLREKSERPGRNPKTGEDIPI) is disordered.

It belongs to the bacterial histone-like protein family. In terms of assembly, heterodimer of an alpha and a beta chain.

Its function is as follows. This protein is one of the two subunits of integration host factor, a specific DNA-binding protein that functions in genetic recombination as well as in transcriptional and translational control. In Aliivibrio salmonicida (strain LFI1238) (Vibrio salmonicida (strain LFI1238)), this protein is Integration host factor subunit alpha.